We begin with the raw amino-acid sequence, 180 residues long: Acireductone dioxygenase (180 aa).

Fe(2+) contacts are provided by His88, His90, Glu94, and His133. 4 residues coordinate Ni(2+): His88, His90, Glu94, and His133.

Belongs to the acireductone dioxygenase (ARD) family. In terms of assembly, monomer. Interacts with MMP14. It depends on Fe(2+) as a cofactor. Ni(2+) serves as cofactor.

It localises to the cytoplasm. The protein localises to the nucleus. Its subcellular location is the cell membrane. It carries out the reaction 1,2-dihydroxy-5-(methylsulfanyl)pent-1-en-3-one + O2 = 4-methylsulfanyl-2-oxobutanoate + formate + 2 H(+). The enzyme catalyses 1,2-dihydroxy-5-(methylsulfanyl)pent-1-en-3-one + O2 = 3-(methylsulfanyl)propanoate + CO + formate + 2 H(+). The protein operates within amino-acid biosynthesis; L-methionine biosynthesis via salvage pathway; L-methionine from S-methyl-5-thio-alpha-D-ribose 1-phosphate: step 5/6. Its function is as follows. Catalyzes 2 different reactions between oxygen and the acireductone 1,2-dihydroxy-3-keto-5-methylthiopentene (DHK-MTPene) depending upon the metal bound in the active site. Fe-containing acireductone dioxygenase (Fe-ARD) produces formate and 2-keto-4-methylthiobutyrate (KMTB), the alpha-ketoacid precursor of methionine in the methionine recycle pathway. Ni-containing acireductone dioxygenase (Ni-ARD) produces methylthiopropionate, carbon monoxide and formate, and does not lie on the methionine recycle pathway. The chain is Acireductone dioxygenase from Gallus gallus (Chicken).